We begin with the raw amino-acid sequence, 101 residues long: Large ribosomal subunit protein bL21 (101 aa).

The protein belongs to the bacterial ribosomal protein bL21 family. In terms of assembly, part of the 50S ribosomal subunit. Contacts protein L20.

Its function is as follows. This protein binds to 23S rRNA in the presence of protein L20. This Metamycoplasma arthritidis (strain 158L3-1) (Mycoplasma arthritidis) protein is Large ribosomal subunit protein bL21.